The chain runs to 143 residues: Large ribosomal subunit protein uL11 (143 aa).

It belongs to the universal ribosomal protein uL11 family. Part of the ribosomal stalk of the 50S ribosomal subunit. Interacts with L10 and the large rRNA to form the base of the stalk. L10 forms an elongated spine to which L12 dimers bind in a sequential fashion forming a multimeric L10(L12)X complex. One or more lysine residues are methylated.

Functionally, forms part of the ribosomal stalk which helps the ribosome interact with GTP-bound translation factors. The protein is Large ribosomal subunit protein uL11 of Kocuria rhizophila (strain ATCC 9341 / DSM 348 / NBRC 103217 / DC2201).